We begin with the raw amino-acid sequence, 214 residues long: Cytochrome b (214 aa).

4 consecutive transmembrane segments (helical) span residues 31–51, 75–96, 111–131, and 176–196; these read FGSMLLICLMLQTLTGFFLAI, WTMQNLHAISASLFFICIYIHI, WLSGVTLLFTLMATAFFGYVL, and FFALHFILPFIIISLSSAHIM. Heme b-binding residues include histidine 81 and histidine 95. Heme b is bound by residues histidine 180 and histidine 194. Histidine 199 is a binding site for a ubiquinone.

Belongs to the cytochrome b family. The cytochrome bc1 complex contains 3 respiratory subunits (MT-CYB, CYC1 and UQCRFS1), 2 core proteins (UQCRC1 and UQCRC2) and probably 6 low-molecular weight proteins. The cofactor is heme b.

The protein resides in the mitochondrion inner membrane. Its function is as follows. Component of the ubiquinol-cytochrome c reductase complex (complex III or cytochrome b-c1 complex) that is part of the mitochondrial respiratory chain. The b-c1 complex mediates electron transfer from ubiquinol to cytochrome c. Contributes to the generation of a proton gradient across the mitochondrial membrane that is then used for ATP synthesis. The sequence is that of Cytochrome b (MT-CYB) from Elapsoidea semiannulata (Angolan garter snake).